The sequence spans 555 residues: Myo-inositol transporter 2 (555 aa).

The Cytoplasmic segment spans residues 1–61; the sequence is MSSTLDTITP…NLVRAENEDK (61 aa). The chain crosses the membrane as a helical span at residues 62-82; that stretch reads VTPYFMFLISVAAIAGFLFGY. The Extracellular segment spans residues 83 to 108; that stretch reads DTGIVGAALPMVGTSLGHTLSATESE. Residues 109–129 form a helical membrane-spanning segment; it reads IITAGTTIGAIFGASILGTMA. Residues 130–142 are Cytoplasmic-facing; the sequence is DKLGRKWAMIISD. The helical transmembrane segment at 143-163 threads the bilayer; sequence FAFTAGAIIIAASYSVPQIIV. Over 164–165 the chain is Extracellular; that stretch reads GR. The helical transmembrane segment at 166–186 threads the bilayer; the sequence is LVLGVGVGGAAVIAPLYIAEL. The Cytoplasmic segment spans residues 187 to 200; the sequence is APTAVRGRCVGANA. A helical transmembrane segment spans residues 201-221; it reads FCIPFGQVVASAIGAGFQAGV. Topologically, residues 222-228 are extracellular; sequence PYHIGWR. The helical transmembrane segment at 229–249 threads the bilayer; the sequence is VLFGLGVVPSVVQLCLMHFLP. The Cytoplasmic portion of the chain corresponds to 250 to 328; sequence ESPRVLVLRG…AIISVSGVQA (79 aa). Residues 329–349 traverse the membrane as a helical segment; the sequence is FGQLTGFNTLLYYSGTIFGLL. Residues 350–355 lie on the Extracellular side of the membrane; the sequence is GLKNGA. A helical transmembrane segment spans residues 356 to 376; sequence AAGLIPSCLNALFVFIGMSIV. Residues 377–385 lie on the Cytoplasmic side of the membrane; it reads DKVGRRKLM. Residues 386-406 form a helical membrane-spanning segment; sequence ITFIPGMMIAFTWTIISFHFL. Residues 407 to 427 lie on the Extracellular side of the membrane; the sequence is TKPTGGLLLKDYQYSTPLVGS. A helical transmembrane segment spans residues 428 to 448; sequence VLGSIVLFVIPFGLTYSHIIW. Residues 449–461 lie on the Cytoplasmic side of the membrane; that stretch reads YQSEFLPLEIRAA. A helical transmembrane segment spans residues 462–482; it reads GSAISTTACWLANLVVSVAYL. The Extracellular portion of the chain corresponds to 483 to 487; that stretch reads TQLEK. Residues 488–508 form a helical membrane-spanning segment; it reads LGATGTYGLYLGFITIGYIFV. Over 509–555 the chain is Cytoplasmic; the sequence is YFCYPETKGLSIDETAEIFIDGFGIEKAHQMLREKRAFAAELYAGRA.

It belongs to the major facilitator superfamily. Sugar transporter (TC 2.A.1.1) family.

The protein localises to the cell membrane. It catalyses the reaction myo-inositol(out) + H(+)(out) = myo-inositol(in) + H(+)(in). Functionally, transporter for myo-inositol. In Cryptococcus neoformans var. grubii serotype A (strain H99 / ATCC 208821 / CBS 10515 / FGSC 9487) (Filobasidiella neoformans var. grubii), this protein is Myo-inositol transporter 2.